The primary structure comprises 488 residues: ATP synthase subunit beta (488 aa).

An ATP-binding site is contributed by 164 to 171 (GGAGVGKT).

Belongs to the ATPase alpha/beta chains family. In terms of assembly, F-type ATPases have 2 components, CF(1) - the catalytic core - and CF(0) - the membrane proton channel. CF(1) has five subunits: alpha(3), beta(3), gamma(1), delta(1), epsilon(1). CF(0) has four main subunits: a(1), b(1), b'(1) and c(9-12).

Its subcellular location is the cellular thylakoid membrane. The enzyme catalyses ATP + H2O + 4 H(+)(in) = ADP + phosphate + 5 H(+)(out). In terms of biological role, produces ATP from ADP in the presence of a proton gradient across the membrane. The catalytic sites are hosted primarily by the beta subunits. The protein is ATP synthase subunit beta of Prochlorococcus marinus (strain MIT 9303).